We begin with the raw amino-acid sequence, 823 residues long: Leucine--tRNA ligase (823 aa).

Positions 55–65 (PYPSGNLHIGH) match the 'HIGH' region motif. Positions 590-594 (KMSKS) match the 'KMSKS' region motif. K593 is an ATP binding site.

It belongs to the class-I aminoacyl-tRNA synthetase family.

It localises to the cytoplasm. The enzyme catalyses tRNA(Leu) + L-leucine + ATP = L-leucyl-tRNA(Leu) + AMP + diphosphate. The protein is Leucine--tRNA ligase of Deinococcus radiodurans (strain ATCC 13939 / DSM 20539 / JCM 16871 / CCUG 27074 / LMG 4051 / NBRC 15346 / NCIMB 9279 / VKM B-1422 / R1).